Here is a 219-residue protein sequence, read N- to C-terminus: UPF0126 membrane protein SCO5481 (219 aa).

Helical transmembrane passes span 10–30 (VQHT…ALLA), 34–54 (NFDV…GGLF), 66–86 (AFTD…VFFL), 93–113 (LQTG…VAGT), 120–140 (GLGL…GGVL), and 158–178 (LYAV…RYEA).

It belongs to the UPF0126 family.

The protein localises to the cell membrane. In Streptomyces coelicolor (strain ATCC BAA-471 / A3(2) / M145), this protein is UPF0126 membrane protein SCO5481.